A 779-amino-acid polypeptide reads, in one-letter code: Putative helicase V13 (779 aa).

The SF3 helicase domain maps to 477 to 642 (DNPKPFITSL…FVKEEELNEK (166 aa)). 504-511 (GKSNAGKS) contributes to the ATP binding site.

This Acanthamoeba polyphaga (Amoeba) protein is Putative helicase V13.